The chain runs to 555 residues: Perforin-1 (555 aa).

A signal peptide spans 1 to 21; it reads MAARLLLLGILLLLLPLPVPA. Intrachain disulfides connect Cys23-Cys76, Cys31-Cys73, and Cys102-Cys176. One can recognise an MACPF domain in the interval 27-375; it reads ARSECKRSHK…QYLTDRARWR (349 aa). A beta stranded transmembrane segment spans residues 129–149; that stretch reads WKVGLDVTPKPTSNVHVSVAG. An N-linked (GlcNAc...) asparagine glycan is attached at Asn205. 4 disulfide bridges follow: Cys242-Cys408, Cys377-Cys393, Cys381-Cys395, and Cys397-Cys407. A beta stranded transmembrane segment spans residues 257 to 279; the sequence is CLTVEAQVNIGIHGSISAEAKAC. Residues 376-408 form the EGF-like domain; it reads DCSRPCPPGRQKSPRDPCQCVCHGSAVTTQDCC. The C2 domain maps to 397-519; that stretch reads CHGSAVTTQD…CNLNHGHLKF (123 aa). 10 residues coordinate Ca(2+): Gly429, Asp430, Thr433, Ala434, Asp436, Asp484, Asp486, Asp490, Asp491, and Asp492. Cystine bridges form between Cys497–Cys510 and Cys525–Cys534. N-linked (GlcNAc...) asparagine glycosylation is present at Asn549.

This sequence belongs to the complement C6/C7/C8/C9 family. Monomer, as soluble protein. Homooligomer; homooligomerizes to form a pore-forming ring. The cofactor is Ca(2+). Post-translationally, N-glycosylated.

Its subcellular location is the cytolytic granule. It is found in the secreted. The protein localises to the cell membrane. It localises to the endosome lumen. Its function is as follows. Pore-forming protein that plays a key role in granzyme-mediated programmed cell death, and in defense against virus-infected or neoplastic cells. Plays an important role in killing other cells that are recognized as non-self by the immune system, e.g. in transplant rejection or some forms of autoimmune disease. Can insert into the membrane of target cells in its calcium-bound form, oligomerize and form large pores. Promotes cytolysis and apoptosis of target cells by mediating the passage and uptake of cytotoxic granzymes. Facilitates the delivery of cationic cargo protein, while anionic or neural proteins are not delivered efficiently. Perforin pores allow the release of mature caspase-7 (CASP7) into the extracellular milieu. This Homo sapiens (Human) protein is Perforin-1 (PRF1).